The chain runs to 372 residues: MFQFEITSNCSNTDARTGIFHTPNGQVNTPRFMPVGTLGTVKGISSKQLTSTGSEMILSNTFHLHLQPGEKLVKESGGIHKFMNWPKPILTDSGGYQVFSLAKLNNISDKGVEFKNPRDGSHVFLSPEKVMQIQMDLGSDVAMAFDHCPPHTANENDIEDSLLRTHSWLQKCVETHQKSNQALFGIIQGGKYPRLREYSAKFTSSFDLPGIAVGGVSVGEAVEEIHSVINYIPKFLPINKPRYLMGIGSLREISLAVAKGFDIFDCVLPTRLGRHGTAFFNDQRLNLRNARFKNDFSPIDKTCKCETCKSYSRAYLHHLIRNDEILGLTLISLHNIAHLIRFTNAISNAIKDNCFTIDFAPWKTASIAHHTW.

Aspartate 92 serves as the catalytic Proton acceptor. Residues 92–96 (DSGGY), aspartate 146, glutamine 188, and glycine 215 contribute to the substrate site. An RNA binding region spans residues 246-252 (GIGSLRE). Residue aspartate 265 is the Nucleophile of the active site. An RNA binding; important for wobble base 34 recognition region spans residues 270 to 274 (TRLGR). Zn(2+)-binding residues include cysteine 303, cysteine 305, cysteine 308, and histidine 334.

It belongs to the queuine tRNA-ribosyltransferase family. As to quaternary structure, homodimer. Within each dimer, one monomer is responsible for RNA recognition and catalysis, while the other monomer binds to the replacement base PreQ1. Requires Zn(2+) as cofactor.

The catalysed reaction is 7-aminomethyl-7-carbaguanine + guanosine(34) in tRNA = 7-aminomethyl-7-carbaguanosine(34) in tRNA + guanine. It functions in the pathway tRNA modification; tRNA-queuosine biosynthesis. Its function is as follows. Catalyzes the base-exchange of a guanine (G) residue with the queuine precursor 7-aminomethyl-7-deazaguanine (PreQ1) at position 34 (anticodon wobble position) in tRNAs with GU(N) anticodons (tRNA-Asp, -Asn, -His and -Tyr). Catalysis occurs through a double-displacement mechanism. The nucleophile active site attacks the C1' of nucleotide 34 to detach the guanine base from the RNA, forming a covalent enzyme-RNA intermediate. The proton acceptor active site deprotonates the incoming PreQ1, allowing a nucleophilic attack on the C1' of the ribose to form the product. After dissociation, two additional enzymatic reactions on the tRNA convert PreQ1 to queuine (Q), resulting in the hypermodified nucleoside queuosine (7-(((4,5-cis-dihydroxy-2-cyclopenten-1-yl)amino)methyl)-7-deazaguanosine). This chain is Queuine tRNA-ribosyltransferase, found in Prochlorococcus marinus (strain MIT 9312).